Here is a 519-residue protein sequence, read N- to C-terminus: 3-octaprenyl-4-hydroxybenzoate carboxy-lyase (519 aa).

N177 is a Mn(2+) binding site. Residues 180 to 182 (IYR), 194 to 196 (RWL), and 199 to 200 (RG) each bind prenylated FMN. E243 is a Mn(2+) binding site. D318 acts as the Proton donor in catalysis.

It belongs to the UbiD family. In terms of assembly, homohexamer. Requires prenylated FMN as cofactor. Mn(2+) is required as a cofactor.

Its subcellular location is the cell membrane. The catalysed reaction is a 4-hydroxy-3-(all-trans-polyprenyl)benzoate + H(+) = a 2-(all-trans-polyprenyl)phenol + CO2. It functions in the pathway cofactor biosynthesis; ubiquinone biosynthesis. Catalyzes the decarboxylation of 3-octaprenyl-4-hydroxy benzoate to 2-octaprenylphenol, an intermediate step in ubiquinone biosynthesis. This chain is 3-octaprenyl-4-hydroxybenzoate carboxy-lyase, found in Burkholderia thailandensis (strain ATCC 700388 / DSM 13276 / CCUG 48851 / CIP 106301 / E264).